The sequence spans 28 residues: Cruzioseptin-4 (28 aa).

Glu-25 carries the glutamic acid 1-amide modification. A propeptide spanning residues 27 to 28 (EH) is cleaved from the precursor.

In terms of tissue distribution, expressed by the skin glands.

The protein localises to the secreted. In terms of biological role, has antimicrobial activity. The polypeptide is Cruzioseptin-4 (Cruziohyla calcarifer (Splendid leaf frog)).